A 299-amino-acid polypeptide reads, in one-letter code: Heterodisulfide reductase subunit B-like protein (299 aa).

It belongs to the HdrB family. In terms of assembly, the heterodisulfide reductase is composed of three subunits; HdlA, HdlB and HdlC. It forms a complex with the F420-non-reducing hydrogenase (Mvh), which provides the reducing equivalents to the heterodisulfide reductase.

Its subcellular location is the cytoplasm. Has oxidoreductase activity. The Hdl and Mvh subunits may together mediate electron transfer from hydrogen to an unidentified electron acceptor on the cytoplasmic side of the membrane. This Archaeoglobus profundus (strain DSM 5631 / JCM 9629 / NBRC 100127 / Av18) protein is Heterodisulfide reductase subunit B-like protein (hdlB).